The primary structure comprises 367 residues: (E)-2-epi-beta-caryophyllene synthase (367 aa).

Mg(2+) contacts are provided by Asp93, Asn234, and Ser238. The DDXXE motif signature appears at 93 to 97 (DDIAE).

This sequence belongs to the terpene synthase family. The cofactor is Mg(2+). Mn(2+) is required as a cofactor.

The catalysed reaction is (2E,6E)-farnesyl diphosphate = (E)-2-epi-beta-caryophyllene + diphosphate. It functions in the pathway secondary metabolite biosynthesis; terpenoid biosynthesis. Its function is as follows. Sesquiterpene synthase converting farnesyl diphosphate to (E)-2-epi-beta-caryophyllene as the major product, and to two other unidentified sesquiterpenes. Has no diterpene synthase activity. The polypeptide is (E)-2-epi-beta-caryophyllene synthase (Selaginella moellendorffii (Spikemoss)).